The chain runs to 262 residues: Thiazole synthase (262 aa).

The active-site Schiff-base intermediate with DXP is the lysine 97. 1-deoxy-D-xylulose 5-phosphate-binding positions include glycine 158, 185–186, and 207–208; these read AG and NT. A disordered region spans residues 243–262; that stretch reads DKAQASTPTVGQPFWHSAEY.

Belongs to the ThiG family. In terms of assembly, homotetramer. Forms heterodimers with either ThiH or ThiS.

The protein resides in the cytoplasm. The catalysed reaction is [ThiS sulfur-carrier protein]-C-terminal-Gly-aminoethanethioate + 2-iminoacetate + 1-deoxy-D-xylulose 5-phosphate = [ThiS sulfur-carrier protein]-C-terminal Gly-Gly + 2-[(2R,5Z)-2-carboxy-4-methylthiazol-5(2H)-ylidene]ethyl phosphate + 2 H2O + H(+). It participates in cofactor biosynthesis; thiamine diphosphate biosynthesis. Its function is as follows. Catalyzes the rearrangement of 1-deoxy-D-xylulose 5-phosphate (DXP) to produce the thiazole phosphate moiety of thiamine. Sulfur is provided by the thiocarboxylate moiety of the carrier protein ThiS. In vitro, sulfur can be provided by H(2)S. This Neisseria meningitidis serogroup B (strain ATCC BAA-335 / MC58) protein is Thiazole synthase.